Here is a 678-residue protein sequence, read N- to C-terminus: MSTEDNHDSQILTARHRSDASEQSFKSLFGGPSSEDGKETEPDTHDHNHSFSNAKAPAKFANQNVAPFLARHIPEQYAPLGAQSILPADLSSANSKYCYRHRPDQKCRRQADEPSMDKLQRELESLPQGDQQSISHVWSLFSAAPAKHRKLILQGIMAQCCFPQLSYISATVRDLIRIDFITALPPEIAFKILCYLDTTSLCKASQVSRGWRALADDDVVWHRMCEQHIHRKCKKCGWGLPLLDRKRLRESKREIELRATTWDKGVVGPRSPDASAESPPSGKRKLEDDEVAVVKRHCSSLGSDAGVDKDSDFFKTRYRPWKEVYKDRFKVGTNWKYGRCSIKTFKGHTNGVMCLQFEDNILATGSYDTTIKIWDTETGEELRTLRGHESGIRCLQFDDTKLISGSMDRTIKVWNWRTGECISTYTGHRGGVIGLHFDASILASGSVDKTVKIWNFEDKSTFSLRGHTDWVNAVRVDTSSRTVFSASDDCTVRLWDLDTKTCIRTFHGHVGQVQQVVPLPREFEFEEHDAECENDDLSTTSGDADPPSIQASMGLEPNAAYSQSSAFGTSFDNGRAAPPRYMVTSALDSTIRLWETTTGRCLRTFFGHLEGVWALGADTLRIVSGAEDRMIKIWDPRTGKCERTFTGHSGPVTCIGLGDSRFATGSEDCEVRMYSFQS.

The segment at 1–52 (MSTEDNHDSQILTARHRSDASEQSFKSLFGGPSSEDGKETEPDTHDHNHSFS) is disordered. Residues 35–49 (EDGKETEPDTHDHNH) are compositionally biased toward basic and acidic residues. The F-box domain occupies 178-224 (IDFITALPPEIAFKILCYLDTTSLCKASQVSRGWRALADDDVVWHRM). The segment at 266–287 (VVGPRSPDASAESPPSGKRKLE) is disordered. 8 WD repeats span residues 347–375 (GHTNGVMCLQFEDNILATGSYDTTIKIWD), 387–415 (GHESGIRCLQFDDTKLISGSMDRTIKVWN), 427–455 (GHRGGVIGLHFDASILASGSVDKTVKIWN), 466–496 (GHTDWVNAVRVDTSSRTVFSASDDCTVRLWD), 508–543 (GHVGQVQQVVPLPREFEFEEHDAECENDDLSTTSGD), 553–595 (MGLE…RLWE), 607–635 (GHLEGVWALGADTLRIVSGAEDRMIKIWD), and 647–675 (GHSGPVTCIGLGDSRFATGSEDCEVRMYS).

It belongs to the WD repeat MET30/SCONB/SCON-2 family. In terms of assembly, component of the SCF(sconB) E3 ubiquitin ligase complex.

It participates in protein modification; protein ubiquitination. Component of the SCF(sconB) E3 ubiquitin ligase complex involved in the regulation of sulfur metabolite repression, probably by mediating the inactivation or degradation of the metR transcription factor. This chain is Probable E3 ubiquitin ligase complex SCF subunit sconB (sconB), found in Emericella nidulans (strain FGSC A4 / ATCC 38163 / CBS 112.46 / NRRL 194 / M139) (Aspergillus nidulans).